We begin with the raw amino-acid sequence, 86 residues long: MVSEQFNAAAEKVKSLTKRPSDDEFLQLYALFKQASVGDNDTAKPGLLDLKGKAKWEAWNKQKGKSSEAAQQEYITFVEGLVAKYA.

The 85-residue stretch at 2-86 (VSEQFNAAAE…FVEGLVAKYA (85 aa)) folds into the ACB domain. An acyl-CoA contacts are provided by residues K14, 29–33 (YALFK), K51, K55, and Y74.

The protein belongs to the ACBP family. Expressed in larval and pupal brains. In adults, expressed in cardia, part of the Malpighian tubules, fat body, and gametes of both sexes.

Binds medium- and long-chain acyl-CoA esters with very high affinity and may function as an intracellular carrier of acyl-CoA esters. May be involved in energy metabolism in a manner that depends on the substrate used for energy production. Dbi and its metabolites are involved in the regulation of multiple biological processes. The polypeptide is Acyl-CoA-binding protein homolog (Drosophila melanogaster (Fruit fly)).